The following is a 225-amino-acid chain: 7-carboxy-7-deazaguanine synthase (225 aa).

Substrate-binding positions include 12–14 and Arg27; that span reads IQG. The Radical SAM core domain occupies 18–225; it reads YIGVRQLFVR…PQVHKYLGVR (208 aa). The [4Fe-4S] cluster site is built by Cys31, Cys35, and Cys38. Thr40 serves as a coordination point for Mg(2+). Residue Thr80 coordinates substrate. Gly82 is a binding site for S-adenosyl-L-methionine.

Belongs to the radical SAM superfamily. 7-carboxy-7-deazaguanine synthase family. In terms of assembly, homodimer. It depends on [4Fe-4S] cluster as a cofactor. The cofactor is S-adenosyl-L-methionine. Requires Mg(2+) as cofactor.

The enzyme catalyses 6-carboxy-5,6,7,8-tetrahydropterin + H(+) = 7-carboxy-7-deazaguanine + NH4(+). It functions in the pathway purine metabolism; 7-cyano-7-deazaguanine biosynthesis. Functionally, catalyzes the complex heterocyclic radical-mediated conversion of 6-carboxy-5,6,7,8-tetrahydropterin (CPH4) to 7-carboxy-7-deazaguanine (CDG), a step common to the biosynthetic pathways of all 7-deazapurine-containing compounds. This is 7-carboxy-7-deazaguanine synthase from Archaeoglobus fulgidus (strain ATCC 49558 / DSM 4304 / JCM 9628 / NBRC 100126 / VC-16).